A 430-amino-acid chain; its full sequence is Trigger factor (430 aa).

Positions 163-248 constitute a PPIase FKBP-type domain; it reads GNIAIIDFKG…IKDIKVKELP (86 aa).

It belongs to the FKBP-type PPIase family. Tig subfamily.

It is found in the cytoplasm. It catalyses the reaction [protein]-peptidylproline (omega=180) = [protein]-peptidylproline (omega=0). Its function is as follows. Involved in protein export. Acts as a chaperone by maintaining the newly synthesized protein in an open conformation. Functions as a peptidyl-prolyl cis-trans isomerase. The chain is Trigger factor from Clostridium botulinum (strain Loch Maree / Type A3).